The following is a 280-amino-acid chain: 2-dehydro-3-deoxyphosphooctonate aldolase (280 aa).

The protein belongs to the KdsA family.

The protein localises to the cytoplasm. It catalyses the reaction D-arabinose 5-phosphate + phosphoenolpyruvate + H2O = 3-deoxy-alpha-D-manno-2-octulosonate-8-phosphate + phosphate. It participates in carbohydrate biosynthesis; 3-deoxy-D-manno-octulosonate biosynthesis; 3-deoxy-D-manno-octulosonate from D-ribulose 5-phosphate: step 2/3. It functions in the pathway bacterial outer membrane biogenesis; lipopolysaccharide biosynthesis. In Thiobacillus denitrificans (strain ATCC 25259 / T1), this protein is 2-dehydro-3-deoxyphosphooctonate aldolase.